The following is a 114-amino-acid chain: UPF0102 protein HPG27_782 (114 aa).

It belongs to the UPF0102 family.

The protein is UPF0102 protein HPG27_782 of Helicobacter pylori (strain G27).